Here is an 88-residue protein sequence, read N- to C-terminus: Small ribosomal subunit protein bS20 (88 aa).

This sequence belongs to the bacterial ribosomal protein bS20 family.

Binds directly to 16S ribosomal RNA. The chain is Small ribosomal subunit protein bS20 from Nitrobacter winogradskyi (strain ATCC 25391 / DSM 10237 / CIP 104748 / NCIMB 11846 / Nb-255).